A 522-amino-acid polypeptide reads, in one-letter code: Maturase K (522 aa).

This sequence belongs to the intron maturase 2 family. MatK subfamily.

The protein localises to the plastid. It localises to the chloroplast. Its function is as follows. Usually encoded in the trnK tRNA gene intron. Probably assists in splicing its own and other chloroplast group II introns. This Aristea glauca protein is Maturase K.